We begin with the raw amino-acid sequence, 743 residues long: Ectonucleotide pyrophosphatase/phosphodiesterase C27A7.3 (743 aa).

The Cytoplasmic segment spans residues 1–23; the sequence is MSNRVVDVNSKKTGTSWKKKLMK. The helical; Signal-anchor for type II membrane protein transmembrane segment at 24–44 threads the bilayer; the sequence is IVIWSLAMLSFIAGLVLLGLV. Over 45–743 the chain is Lumenal; the sequence is AAATISGSKN…LRRNITTSLW (699 aa). Residues D87 and T123 each coordinate Zn(2+). Catalysis depends on T123, which acts as the Nucleophile. N195 is a glycosylation site (N-linked (GlcNAc...) asparagine). Positions 243, 247, 286, and 287 each coordinate Zn(2+). N-linked (GlcNAc...) asparagine glycans are attached at residues N293 and N320. A Zn(2+)-binding site is contributed by H383. N-linked (GlcNAc...) asparagine glycans are attached at residues N406, N434, and N536. The Ca(2+) site is built by D635, N637, D639, I641, and D643. The N-linked (GlcNAc...) asparagine glycan is linked to N737.

The protein belongs to the nucleotide pyrophosphatase/phosphodiesterase family. Zn(2+) serves as cofactor. The cofactor is Ca(2+).

It localises to the membrane. In terms of biological role, probable phosphodiesterase. In Caenorhabditis elegans, this protein is Ectonucleotide pyrophosphatase/phosphodiesterase C27A7.3.